The following is a 310-amino-acid chain: Ribose-phosphate pyrophosphokinase (310 aa).

Residues 34-36 (DQE) and 93-94 (RQ) contribute to the ATP site. Mg(2+) contacts are provided by H127 and D167. K190 is an active-site residue. D-ribose 5-phosphate contacts are provided by residues R192, D216, and 220–224 (DSGGT).

It belongs to the ribose-phosphate pyrophosphokinase family. Class I subfamily. Homohexamer. Mg(2+) serves as cofactor.

The protein resides in the cytoplasm. It carries out the reaction D-ribose 5-phosphate + ATP = 5-phospho-alpha-D-ribose 1-diphosphate + AMP + H(+). It participates in metabolic intermediate biosynthesis; 5-phospho-alpha-D-ribose 1-diphosphate biosynthesis; 5-phospho-alpha-D-ribose 1-diphosphate from D-ribose 5-phosphate (route I): step 1/1. Its function is as follows. Involved in the biosynthesis of the central metabolite phospho-alpha-D-ribosyl-1-pyrophosphate (PRPP) via the transfer of pyrophosphoryl group from ATP to 1-hydroxyl of ribose-5-phosphate (Rib-5-P). This chain is Ribose-phosphate pyrophosphokinase, found in Rhizobium meliloti (strain 1021) (Ensifer meliloti).